The primary structure comprises 120 residues: Seripauperin-20 (120 aa).

A helical membrane pass occupies residues 7–25; sequence IAAGVAAIAAGASATTTLA.

It belongs to the SRP1/TIP1 family. Seripauperin subfamily.

Its subcellular location is the membrane. In Saccharomyces cerevisiae (strain ATCC 204508 / S288c) (Baker's yeast), this protein is Seripauperin-20 (PAU20).